Consider the following 601-residue polypeptide: Transcription factor Ken (601 aa).

Residues 33 to 101 enclose the BTB domain; the sequence is ADLTIVCENK…LYSGQTCITS (69 aa). 3 disordered regions span residues 188–276, 331–365, and 471–491; these read AAEC…TINP, LSDGSDINSSPENYVVTPHRKRRPGFHNTQSDNQP, and DHPEGRSGSASGSGANLAGSN. Composition is skewed to basic and acidic residues over residues 190-200 and 207-216; these read ECERSGGHNNK and CTHKDNKSDK. A compositionally biased stretch (polar residues) spans 223–234; it reads NLSNAPPSGTSG. Residues 235 to 247 are compositionally biased toward low complexity; it reads SNSNISTSSNHQQ. Over residues 248-258 the composition is skewed to basic residues; sequence QQHHHHHHHNH. The segment covering 259-275 has biased composition (low complexity); that stretch reads NNNNNNNNNNSSSSTIN. Positions 476–490 are enriched in low complexity; that stretch reads RSGSASGSGANLAGS. 3 consecutive C2H2-type zinc fingers follow at residues 500–522, 528–551, and 567–590; these read YRCEYCGKQFGMSWNLKTHLRVH, FACRLCVAMFKQKAHLLKHLCSVH, and YSCCFCSMCFESVQELVRHLSGHH.

In terms of tissue distribution, expressed from stage 5 in two rather faint stripes at positions of 64% (anterior domain; AD) and 17% (posterior domain; PD) egg length. During early gastrulation, at stage 6, these two stripes become more evident and detectable at the region posterior to the cephalic furrow and in the hindgut primordium. The AD disappears as gastrulation proceeds, while the PD remains. At stage 15, the AD appears again in the foregut, and PD expression in the hindgut and anal pad. In imaginal disks, it is ubiquitously expressed in both males and females in genital and eye-antennal disks. Not expressed in the brain. In genital disks, it is expressed along the margin of the anterior bulbus in males, while in females it is expressed in the posterior compartment along the anterior-posterior border, with medial expansion in the most posterior region.

It is found in the nucleus. Functionally, transcription factor required for terminalia development. Negative regulator of the JAK/STAT pathway: represses JAK/STAT-dependent expression of ventral veins lacking (vvl) in the posterior spiracles. This chain is Transcription factor Ken (ken), found in Drosophila melanogaster (Fruit fly).